The following is a 247-amino-acid chain: V-type proton ATPase subunit D (247 aa).

Belongs to the V-ATPase D subunit family. In terms of assembly, V-ATPase is a heteromultimeric enzyme made up of two complexes: the ATP-hydrolytic V1 complex and the proton translocation V0 complex. The V1 complex consists of three catalytic AB heterodimers that form a heterohexamer, three peripheral stalks each consisting of EG heterodimers, one central rotor including subunits D and F, and the regulatory subunits C and H. The proton translocation complex V0 consists of the proton transport subunit a, a ring of proteolipid subunits c9c'', rotary subunit d, subunits e and f, and the accessory subunits ATP6AP1/Ac45 and ATP6AP2/PRR. Interacts with SNX10.

The protein resides in the membrane. Its subcellular location is the cytoplasmic vesicle. The protein localises to the clathrin-coated vesicle membrane. It is found in the cytoplasm. It localises to the cytoskeleton. The protein resides in the microtubule organizing center. Its subcellular location is the centrosome. The protein localises to the cell projection. It is found in the cilium. Functionally, subunit of the V1 complex of vacuolar(H+)-ATPase (V-ATPase), a multisubunit enzyme composed of a peripheral complex (V1) that hydrolyzes ATP and a membrane integral complex (V0) that translocates protons. V-ATPase is responsible for acidifying and maintaining the pH of intracellular compartments and in some cell types, is targeted to the plasma membrane, where it is responsible for acidifying the extracellular environment. May play a role in cilium biogenesis through regulation of the transport and the localization of proteins to the cilium. The sequence is that of V-type proton ATPase subunit D (Atp6v1d) from Mus musculus (Mouse).